We begin with the raw amino-acid sequence, 634 residues long: Ankyrin repeat and SOCS box protein 2 (634 aa).

The 20-residue stretch at 26–45 (SEEELLQMAIEQSLADKTRG) folds into the UIM domain. Residues 36–82 (EQSLADKTRGPTPAEASASSQTNHQPGHFHPWTRSPSSPENPPARAP) form a disordered region. 12 ANK repeats span residues 104–133 (AAMD…NLAE), 137–167 (EGWL…TIDQ), 171–200 (QEET…EPDI), 204–233 (SRET…DANH), 237–266 (RGWT…KVEA), 270–299 (YSIT…DINT), 303–332 (DSAS…DANK), 336–365 (DGLL…RTRV), 368–397 (SGIS…DVNA), 410–439 (RRSS…DPNR), 440–469 (DVIS…NIDA), and 476–504 (TAFP…DGEP). Serine 371 is subject to Phosphoserine. The region spanning 580–634 (EDWAVIKEKAEPPRPLAHLCRLRVRKAIGKYRIKLLDTLPLPGRLIRYLKYENTQ) is the SOCS box domain.

The protein belongs to the ankyrin SOCS box (ASB) family. Component of a probable ECS E3 ubiquitin-protein ligase complex which contains CUL5, either RBX1 or RNF7/RBX2, Elongin BC complex (ELOB and ELOC) and ASB2. Interacts with SKP2. Through its interaction with SKP2, likely to bridge the formation of dimeric E3-ubiquitin-protein ligase complexes composed of an ECS complex and an SCF(SKP2) complex. Interacts with JAK2; the interaction targets JAK2 for Notch-mediated proteasomal degradation. Interacts with TCF3/E2A; the interaction is mediated by SKP2 and targets TCF3 for Notch-mediated proteasomal degradation. As to quaternary structure, interacts with DES. Monoubiquitinated. In terms of processing, not monoubiquitinated. Post-translationally, phosphorylation at Ser-371 is required for association with FLNA and subsequent FLNA degradation. Highest expression in muscle, heart and spleen. Highly expressed in cells of the first and second heart fields in the developing embryonic heart. At 9.5 dpc, robust expression predominantly in the left and right ventricles (RV) and to a lower extent in inflow and outflow tracts. At 10.5 and 11.5 dpc, expression is restricted to the myocardium with no expression observed in the endocardium. In terms of tissue distribution, not expressed in immature dendritic cells. Highly expressed in adult skeletal muscle with very low levels in adult bone marrow. As to expression, expressed in immature dendritic cells and in primary dendritic cells derived from the spleen. Highly expressed in adult bone marrow with negligible levels in adult skeletal muscle. Expressed at higher levels in T helper type 2 (Th2) cells than in regulatory T (Treg) cells, type 1 helper T (Th1) cells and T helper 17 (Th17) cells.

The protein resides in the cytoplasm. Its subcellular location is the cytoskeleton. It is found in the stress fiber. It localises to the myofibril. The protein localises to the sarcomere. The protein resides in the z line. It participates in protein modification; protein ubiquitination. Its function is as follows. Substrate-recognition component of a SCF-like ECS (Elongin-Cullin-SOCS-box protein) E3 ubiquitin-protein ligase complex which mediates the ubiquitination and subsequent proteasomal degradation of target proteins. Mediates Notch-induced ubiquitination and degradation of substrates including TCF3/E2A and JAK2. Required during embryonic heart development for complete heart looping. Required for cardiomyocyte differentiation. Specifically promotes the ubiquitination of SMAD9 and targets it for proteasomal degradation, leading to avoid excessive accumulation of SMAD9. Plays a role in the regulation of NK-cell migration by modulating protein levels of filamin A/FLNA via regulation of its ubiquitination and proteasome degradation. Involved in myogenic differentiation and targets filamin FLNB for proteasomal degradation but not filamin FLNA. Also targets DES for proteasomal degradation. Acts as a negative regulator of skeletal muscle mass. In terms of biological role, targets filamins FLNA and FLNB for proteasomal degradation. This leads to enhanced adhesion of hematopoietic cells to fibronectin. Required for FLNA degradation in immature cardiomyocytes which is necessary for actin cytoskeleton remodeling, leading to proper organization of myofibrils and function of mature cardiomyocytes. Required for degradation of FLNA and FLNB in immature dendritic cells (DC) which enhances immature DC migration by promoting DC podosome formation and DC-mediated degradation of the extracellular matrix. Does not promote proteasomal degradation of tyrosine-protein kinases JAK1 or JAK2 in hematopoietic cells. In Mus musculus (Mouse), this protein is Ankyrin repeat and SOCS box protein 2.